The chain runs to 513 residues: Xylose import ATP-binding protein XylG (513 aa).

ABC transporter domains follow at residues 5 to 242 (LEMK…VGRE) and 259 to 505 (LRIE…LRSE). 37–44 (GENGSGKS) is a binding site for ATP.

It belongs to the ABC transporter superfamily. Xylose importer (TC 3.A.1.2.4) family. In terms of assembly, the complex is composed of two ATP-binding proteins (XylG), two transmembrane proteins (XylH) and a solute-binding protein (XylF).

It localises to the cell inner membrane. The enzyme catalyses D-xylose(out) + ATP + H2O = D-xylose(in) + ADP + phosphate + H(+). Part of the ABC transporter complex XylFGH involved in xylose import. Responsible for energy coupling to the transport system. The sequence is that of Xylose import ATP-binding protein XylG from Escherichia coli (strain UTI89 / UPEC).